The primary structure comprises 242 residues: MGKISDLNYSQHITLADNFKQKNEALDTWYVGMNDFARIAGGQNSRSNILSPRAFLEFLAKIFTLGYVDFSKRSNEAGRNMMAHIEFSSYSKDTDGNEKMKFYMNNPEGERADLSKVKIEITLASASTKGIREGHTVIIFKQSDGSTNRYEGKSFERKDDSSLHLITNKVLACYQREANKKIARLLNNHQKLNNIQELNDSQELNNSQKLNNSQELNNSQVSCKGSVDSTITDLLEKALNKG.

Its subcellular location is the secreted. In terms of biological role, may contribute to pathogenesis, although some of its characteristics suggest it is a fossil gene. This Shigella flexneri serotype 5a (strain M90T) protein is Invasion chromosome antigen R.